The chain runs to 299 residues: Putative cuticle collagen 155 (299 aa).

An N-terminal signal peptide occupies residues 1–27; that stretch reads MEFEQRIKAYRFVAYSAVAFSVVAVLS. Triple-helical region regions lie at residues 103–132, 151–177, 181–202, and 216–278; these read GAAG…PGHP, GPPG…PGQD, GAPG…GAPG, and GAPG…VGEK. The segment at 107 to 278 is disordered; it reads PAGTPGKPGR…SGTPGGVGEK (172 aa). Residues 129–161 are compositionally biased toward pro residues; the sequence is PGHPPQQPCDPITPPPCQPCPQGPPGPPGPPGP. The segment covering 163–172 has biased composition (gly residues); the sequence is GDAGGNGNPG. Positions 173-197 are enriched in low complexity; the sequence is SPGQDGQPGAPGNKGPSGPNGNPGA. A compositionally biased stretch (pro residues) spans 215–233; sequence PGAPGPQGTPGPQGPPGQP. Residues 250 to 268 show a composition bias toward low complexity; the sequence is PNGNPGQPGADGNPGAPGQ.

The protein belongs to the cuticular collagen family. In terms of assembly, collagen polypeptide chains are complexed within the cuticle by disulfide bonds and other types of covalent cross-links.

Nematode cuticles are composed largely of collagen-like proteins. The cuticle functions both as an exoskeleton and as a barrier to protect the worm from its environment. This chain is Putative cuticle collagen 155 (col-155), found in Caenorhabditis elegans.